The following is a 272-amino-acid chain: Probable FKBP-type peptidyl-prolyl cis-trans isomerase FkpA (272 aa).

The first 20 residues, 1 to 20, serve as a signal peptide directing secretion; the sequence is MNTIFKISALTLSAALALSA. Cysteine 21 carries the N-palmitoyl cysteine lipid modification. A lipid anchor (S-diacylglycerol cysteine) is attached at cysteine 21. Positions 29–40 are enriched in low complexity; the sequence is ASASEPAAASSA. Residues 29–48 are disordered; it reads ASASEPAAASSAQGDTSSIG. A PPIase FKBP-type domain is found at 167 to 253; the sequence is DDIVTVEYEG…VFDVKLVKIG (87 aa).

The protein belongs to the FKBP-type PPIase family.

It localises to the cell membrane. It carries out the reaction [protein]-peptidylproline (omega=180) = [protein]-peptidylproline (omega=0). The polypeptide is Probable FKBP-type peptidyl-prolyl cis-trans isomerase FkpA (fkpA) (Neisseria meningitidis serogroup B (strain ATCC BAA-335 / MC58)).